Consider the following 91-residue polypeptide: Small ribosomal subunit protein uS19 (91 aa).

It belongs to the universal ribosomal protein uS19 family.

Its function is as follows. Protein S19 forms a complex with S13 that binds strongly to the 16S ribosomal RNA. This Synechococcus elongatus (strain ATCC 33912 / PCC 7942 / FACHB-805) (Anacystis nidulans R2) protein is Small ribosomal subunit protein uS19.